We begin with the raw amino-acid sequence, 376 residues long: Histidinol-phosphate aminotransferase (376 aa).

The interval methionine 1 to valine 21 is disordered. At lysine 222 the chain carries N6-(pyridoxal phosphate)lysine.

This sequence belongs to the class-II pyridoxal-phosphate-dependent aminotransferase family. Histidinol-phosphate aminotransferase subfamily. The cofactor is pyridoxal 5'-phosphate.

It carries out the reaction L-histidinol phosphate + 2-oxoglutarate = 3-(imidazol-4-yl)-2-oxopropyl phosphate + L-glutamate. Its pathway is amino-acid biosynthesis; L-histidine biosynthesis; L-histidine from 5-phospho-alpha-D-ribose 1-diphosphate: step 7/9. This is Histidinol-phosphate aminotransferase from Haloquadratum walsbyi (strain DSM 16790 / HBSQ001).